The sequence spans 436 residues: Adenosylhomocysteinase (436 aa).

Residues T62, D136, and E161 each coordinate substrate. 162-164 (TTT) is an NAD(+) binding site. Residues K191 and D195 each coordinate substrate. NAD(+) contacts are provided by residues N196, 225-230 (GFGDVG), E248, N283, 304-306 (IGH), and N352.

The protein belongs to the adenosylhomocysteinase family. NAD(+) is required as a cofactor.

The protein resides in the cytoplasm. The enzyme catalyses S-adenosyl-L-homocysteine + H2O = L-homocysteine + adenosine. Its pathway is amino-acid biosynthesis; L-homocysteine biosynthesis; L-homocysteine from S-adenosyl-L-homocysteine: step 1/1. Its function is as follows. May play a key role in the regulation of the intracellular concentration of adenosylhomocysteine. This chain is Adenosylhomocysteinase, found in Leptospira interrogans serogroup Icterohaemorrhagiae serovar copenhageni (strain Fiocruz L1-130).